A 1324-amino-acid polypeptide reads, in one-letter code: Probable phosphoribosylformylglycinamidine synthase (1324 aa).

ATP contacts are provided by residues 314 to 325, 394 to 396, and Ala681; these read GATTGTGGRIRD and SGF. Residues Asp682, Glu721, Asn725, and Asp894 each coordinate Mg(2+). Ser896 serves as a coordination point for ATP. One can recognise a Glutamine amidotransferase type-1 domain in the interval 1053–1295; it reads RVAIIREEGS…LTWQWAESSE (243 aa). Catalysis depends on Cys1146, which acts as the Nucleophile. Catalysis depends on residues His1280 and Asp1282.

In the N-terminal section; belongs to the FGAMS family.

The protein localises to the cytoplasm. It catalyses the reaction N(2)-formyl-N(1)-(5-phospho-beta-D-ribosyl)glycinamide + L-glutamine + ATP + H2O = 2-formamido-N(1)-(5-O-phospho-beta-D-ribosyl)acetamidine + L-glutamate + ADP + phosphate + H(+). It functions in the pathway purine metabolism; IMP biosynthesis via de novo pathway; 5-amino-1-(5-phospho-D-ribosyl)imidazole from N(2)-formyl-N(1)-(5-phospho-D-ribosyl)glycinamide: step 1/2. Its function is as follows. Phosphoribosylformylglycinamidine synthase involved in the purines biosynthetic pathway. Catalyzes the ATP-dependent conversion of formylglycinamide ribonucleotide (FGAR) and glutamine to yield formylglycinamidine ribonucleotide (FGAM) and glutamate. In Caenorhabditis elegans, this protein is Probable phosphoribosylformylglycinamidine synthase.